A 327-amino-acid chain; its full sequence is tRNA N6-adenosine threonylcarbamoyltransferase (327 aa).

Fe cation-binding residues include His-109 and His-113. Substrate contacts are provided by residues 132–136 (MVSGG), Asp-165, Gly-178, Asp-182, and Asn-268. Asp-296 lines the Fe cation pocket.

The protein belongs to the KAE1 / TsaD family. Fe(2+) is required as a cofactor.

The protein localises to the cytoplasm. The catalysed reaction is L-threonylcarbamoyladenylate + adenosine(37) in tRNA = N(6)-L-threonylcarbamoyladenosine(37) in tRNA + AMP + H(+). Functionally, required for the formation of a threonylcarbamoyl group on adenosine at position 37 (t(6)A37) in tRNAs that read codons beginning with adenine. Is involved in the transfer of the threonylcarbamoyl moiety of threonylcarbamoyl-AMP (TC-AMP) to the N6 group of A37, together with TsaE and TsaB. TsaD likely plays a direct catalytic role in this reaction. The polypeptide is tRNA N6-adenosine threonylcarbamoyltransferase (Thermotoga neapolitana (strain ATCC 49049 / DSM 4359 / NBRC 107923 / NS-E)).